Consider the following 353-residue polypeptide: MSVVFLLQTRPGFERDAQQEARTVALERRGLELKPVETGEGFVLLQSDAPLTPFGWRDLAFSRTLSRVIADIQLGDRDRLTPILDVVGQKAMTFASIWLEWPDTNDGKAMSGFARKFQPLLEEKLATAGRLGQDASTRLQLFFPSKSRVLVSVSEPQWGAPWPLGILRLRMPTDAPSRSTLKLAEAFEVFLGEQGQQDKLKPGMTAVDLGAAPGGWTWQLLRRGIKVYAVDNGPMKGSCDGHPLVKHLRQDGFRFRPPHPVDWLVCDMVERPGRVAELMADWLAEGAARQAVFNLKLPMKKRAEALSDALERIEARMLAAGLAYTLQVKQLYHDREEVTVYLARPAATGRRRR.

Residues serine 179, 212-215, aspartate 231, aspartate 251, and aspartate 267 contribute to the S-adenosyl-L-methionine site; that span reads APGG. Lysine 296 acts as the Proton acceptor in catalysis.

It belongs to the class I-like SAM-binding methyltransferase superfamily. RNA methyltransferase RlmE family. RlmM subfamily. As to quaternary structure, monomer.

It localises to the cytoplasm. The enzyme catalyses cytidine(2498) in 23S rRNA + S-adenosyl-L-methionine = 2'-O-methylcytidine(2498) in 23S rRNA + S-adenosyl-L-homocysteine + H(+). Catalyzes the 2'-O-methylation at nucleotide C2498 in 23S rRNA. This is Ribosomal RNA large subunit methyltransferase M from Laribacter hongkongensis (strain HLHK9).